The primary structure comprises 311 residues: Aspartate carbamoyltransferase catalytic subunit (311 aa).

Carbamoyl phosphate is bound by residues Arg52 and Thr53. Residue Lys80 participates in L-aspartate binding. Carbamoyl phosphate is bound by residues Arg102, His131, and Gln134. L-aspartate contacts are provided by Arg164 and Arg216. Ala259 and Pro260 together coordinate carbamoyl phosphate.

Belongs to the aspartate/ornithine carbamoyltransferase superfamily. ATCase family. As to quaternary structure, heterododecamer (2C3:3R2) of six catalytic PyrB chains organized as two trimers (C3), and six regulatory PyrI chains organized as three dimers (R2).

It catalyses the reaction carbamoyl phosphate + L-aspartate = N-carbamoyl-L-aspartate + phosphate + H(+). It participates in pyrimidine metabolism; UMP biosynthesis via de novo pathway; (S)-dihydroorotate from bicarbonate: step 2/3. Functionally, catalyzes the condensation of carbamoyl phosphate and aspartate to form carbamoyl aspartate and inorganic phosphate, the committed step in the de novo pyrimidine nucleotide biosynthesis pathway. The polypeptide is Aspartate carbamoyltransferase catalytic subunit (Lactiplantibacillus plantarum (strain ATCC BAA-793 / NCIMB 8826 / WCFS1) (Lactobacillus plantarum)).